We begin with the raw amino-acid sequence, 690 residues long: Quinohemoprotein alcohol dehydrogenase ADH IIB (690 aa).

The N-terminal stretch at 1–22 is a signal peptide; the sequence is MKKPLRTSLLMLCLATPLAALA. Glu81 is a pyrroloquinoline quinone binding site. A disulfide bridge links Cys127 with Cys128. Pyrroloquinoline quinone is bound by residues Arg133, Thr177, and 193–194; that span reads GA. Glu195 lines the Ca(2+) pocket. Position 252 (Thr252) interacts with pyrroloquinoline quinone. Residues Asn272 and Asp317 each coordinate Ca(2+). The Proton acceptor role is filled by Asp317. Pyrroloquinoline quinone is bound by residues Lys344, 404-405, and Val547; that span reads NW. In terms of domain architecture, Cytochrome c spans 600–678; that stretch reads EQVQAGKQLY…QIKLYVMSRE (79 aa). Residues Cys613, Cys616, His617, and Met655 each coordinate heme c.

This sequence belongs to the bacterial PQQ dehydrogenase family. As to quaternary structure, monomer. The cofactor is pyrroloquinoline quinone. It depends on Ca(2+) as a cofactor. Heme c serves as cofactor.

The protein resides in the periplasm. The enzyme catalyses 2 oxidized [azurin] + a primary alcohol = 2 reduced [azurin] + an aldehyde + 2 H(+). Inhibited by 10 mM 1-butanol. Catalyzes the dye-linked oxidation of primary alcohols to the corresponding aldehydes and the (subsequent) oxidation of the aldehydes to carboxylic acids. Exhibits activity with longer mono-alcohols (C-4 to C-7) but not with methanol or glycerol. Reacts with 1,2-propanediol and 1,3-propanediol but not with sugar alcohols such as D-sorbitol. The protein is Quinohemoprotein alcohol dehydrogenase ADH IIB of Pseudomonas putida (Arthrobacter siderocapsulatus).